Here is a 430-residue protein sequence, read N- to C-terminus: Protein IQ-DOMAIN 3 (430 aa).

The tract at residues 1-36 (MGKSWFSAVKKALSPEPKQKKEQKPHKSKKWFGKSK) is disordered. Positions 9 to 16 (VKKALSPE) match the Nuclear localization signal 1 motif. Residues 23–35 (QKPHKSKKWFGKS) are compositionally biased toward basic residues. In terms of domain architecture, IQ spans 107–135 (EEIAAIKIQTAFRGYMARRALRALRGLVR). Residues 170-224 (RLRLSEDKQALTRQLQQKHNKDFDKTGENWNDSTLSREKVEANMLNKQVATMRRE) adopt a coiled-coil conformation. A calmodulin-binding region spans residues 213 to 231 (MLNKQVATMRREKALAYAF). Disordered regions lie at residues 271–368 (ENHS…SQSV) and 385–430 (SNLS…TNLA). Positions 286–295 (ARSVASRAMS) are enriched in low complexity. The segment covering 326-340 (SEDSNSIVSFQSEQP) has biased composition (polar residues). The Nuclear localization signal 2 signature appears at 396–403 (AKKRLSFS).

This sequence belongs to the IQD family. As to quaternary structure, binds to multiple calmodulin (CaM) in the presence of Ca(2+) and CaM-like proteins.

It localises to the nucleus. Its subcellular location is the nucleolus. The protein resides in the cytoplasm. The protein localises to the cytoskeleton. Its function is as follows. May be involved in cooperative interactions with calmodulins or calmodulin-like proteins. Recruits calmodulin proteins to microtubules, thus being a potential scaffold in cellular signaling and trafficking. May associate with nucleic acids and regulate gene expression at the transcriptional or post-transcriptional level. The sequence is that of Protein IQ-DOMAIN 3 from Arabidopsis thaliana (Mouse-ear cress).